The sequence spans 1372 residues: DNA-directed RNA polymerase subunit beta' (1372 aa).

Positions 69, 71, 84, and 87 each coordinate Zn(2+). Mg(2+) contacts are provided by aspartate 460, aspartate 462, and aspartate 464. Positions 808, 882, 889, and 892 each coordinate Zn(2+).

This sequence belongs to the RNA polymerase beta' chain family. In terms of assembly, the RNAP catalytic core consists of 2 alpha, 1 beta, 1 beta' and 1 omega subunit. When a sigma factor is associated with the core the holoenzyme is formed, which can initiate transcription. Mg(2+) serves as cofactor. Zn(2+) is required as a cofactor.

It carries out the reaction RNA(n) + a ribonucleoside 5'-triphosphate = RNA(n+1) + diphosphate. Its function is as follows. DNA-dependent RNA polymerase catalyzes the transcription of DNA into RNA using the four ribonucleoside triphosphates as substrates. This is DNA-directed RNA polymerase subunit beta' from Rickettsia bellii (strain OSU 85-389).